Reading from the N-terminus, the 498-residue chain is Cytotardin (498 aa).

The interval 18 to 58 is coil 1A; sequence DRVHSKDELQALNTRLAKYIDKIRNLENENVALQRQLQTAE. Residues 22–378 enclose the IF rod domain; the sequence is SKDELQALNT…KLLSGEEQRL (357 aa). The tract at residues 59–69 is linker 1; the sequence is QTTVTEIHRVS. Residues 70-213 form a coil 1B region; that stretch reads KNYDEELAKL…ENLREEKSQR (144 aa). The linker 2 stretch occupies residues 214–231; that stretch reads QYLLHDLQRGLQDEFESK. Residues 232 to 371 form a coil 2 region; that stretch reads LVQQLNELRA…AELATYNKLL (140 aa). The segment at 381–425 is disordered; the sequence is DGSGTVIRRPTGGATGTGSGIYGGTGSGGYSRDIGSTTTTKTTYT. The segment covering 393–409 has biased composition (gly residues); it reads GATGTGSGIYGGTGSGG.

Belongs to the intermediate filament family.

It is found in the cytoplasm. Its subcellular location is the cell cortex. In terms of biological role, intermediate filament (IF) protein that forms both short filaments and extensive cytoskeletal networks which most likely are homomeric. Some of the cytotardin arrays display cage-like perinuclear structures, while others are located in the periphery close to the cell membrane. The entire tardigrade body is ensheathed by a grid of belt-like filaments formed by the cytotardin protein, which retain their integrity even in contracted specimens. The belt-like structures encircling each epidermal cell might help to resist the shearing forces that arise during freezing and thawing cycles, whereas the dense meshwork at the basis of each claw and around the stylets might provide the tissue stability necessary for locomotion and feeding. This Hypsibius exemplaris (Freshwater tardigrade) protein is Cytotardin.